The following is a 91-amino-acid chain: Small ribosomal subunit protein uS19 (91 aa).

Belongs to the universal ribosomal protein uS19 family.

Protein S19 forms a complex with S13 that binds strongly to the 16S ribosomal RNA. The protein is Small ribosomal subunit protein uS19 of Prochlorococcus marinus (strain SARG / CCMP1375 / SS120).